We begin with the raw amino-acid sequence, 227 residues long: Cytidylate kinase (227 aa).

Residue 12-20 (GPSGAGKGT) participates in ATP binding.

Belongs to the cytidylate kinase family. Type 1 subfamily.

The protein resides in the cytoplasm. The catalysed reaction is CMP + ATP = CDP + ADP. The enzyme catalyses dCMP + ATP = dCDP + ADP. The chain is Cytidylate kinase from Salmonella arizonae (strain ATCC BAA-731 / CDC346-86 / RSK2980).